A 74-amino-acid chain; its full sequence is Consomatin Gh1 (74 aa).

The N-terminal stretch at 1-22 (MQTACWVMVMMMVWITAPLSEG) is a signal peptide. The propeptide occupies 23–57 (GKLNDVIRGLVPDDVTPQLILRSLFFHRPSDSVVR). C65 and C70 form a disulfide bridge. At W67 the chain carries D-tryptophan. P71, P72, and P74 each carry 4-hydroxyproline.

This sequence belongs to the conotoxin C superfamily. Consomatin family. In terms of tissue distribution, expressed by the venom duct.

It is found in the secreted. In terms of biological role, moderately activates human somatostatin receptors (SSTR) with a preferential activation of SSTR1 and SSTR4. In vivo, does not cause behavioral changes in mice within a few minutes of intracranial injection, but causes a progressive loss of movement thereafter. Four to five hours after injection, mice recover, even with the highest dose tested. Shows antinociception and antihyperalgesia activities in two mouse models of acute pain, most probably by acting outside the central nervous system. This Conus grahami (Cone snail) protein is Consomatin Gh1.